Reading from the N-terminus, the 138-residue chain is Small ribosomal subunit protein uS9c (138 aa).

It belongs to the universal ribosomal protein uS9 family.

It is found in the plastid. The protein localises to the chloroplast. The polypeptide is Small ribosomal subunit protein uS9c (rps9) (Phaeodactylum tricornutum (strain CCAP 1055/1)).